The chain runs to 283 residues: MAHRGAHFAFRSRWQKTDDELCRHSMSFILHKAIRNDFFQSYLYLLEKIPLVKLYALTSQVINGEMQFYARAKLFYQEVPATEEGMMGNFIELSSPDIQASQKFLRKFVGGPGRAGTDCALDCGSGIGRVSKHVLLPVFNSVELVDMMESFLLEAQNYLQVKGDKVESYHCYSLQEFTPPFRRYDVIWIQWVSGHLTDKDLLAFLSRCRDGLKENGIIILKDNVAREGCILDLSDSSVTRDMDILRSLIRKSGLVVLGQEKQDGFPEQCIPVWMFALHSDRHS.

S-adenosyl-L-methionine contacts are provided by residues Gly124, Arg129, Asp146, 174-175 (LQ), Gln190, and His195.

The protein belongs to the methyltransferase superfamily. NTM1 family.

It localises to the nucleus. It carries out the reaction N-terminal L-alanyl-L-prolyl-L-lysyl-[protein] + S-adenosyl-L-methionine = N-terminal N-methyl-L-alanyl-L-prolyl-L-lysyl-[protein] + S-adenosyl-L-homocysteine + H(+). The catalysed reaction is N-terminal L-prolyl-L-prolyl-L-lysyl-[protein] + S-adenosyl-L-methionine = N-terminal N-methyl-L-prolyl-L-prolyl-L-lysyl-[protein] + S-adenosyl-L-homocysteine + H(+). The enzyme catalyses N-terminal L-seryl-L-prolyl-L-lysyl-[protein] + S-adenosyl-L-methionine = N-terminal N-methyl-L-seryl-L-prolyl-L-lysyl-[protein] + S-adenosyl-L-homocysteine + H(+). In terms of biological role, alpha N-methyltransferase that methylates the N-terminus of target proteins containing the N-terminal motif [Ala/Pro/Ser]-Pro-Lys when the initiator Met is cleaved. Specifically catalyzes monomethylation of exposed alpha-amino group of Ala or Ser residue in the [Ala/Ser]-Pro-Lys motif and Pro in the Pro-Pro-Lys motif. Predominantly functions as a mono-methyltransferase but is also able to di-/tri-methylate the GPKRIA peptide and di-methylate the PPKRIA peptide (in vitro). May activate NTMT1 by priming its substrates for trimethylation. This chain is N-terminal Xaa-Pro-Lys N-methyltransferase 2, found in Homo sapiens (Human).